Here is a 417-residue protein sequence, read N- to C-terminus: D-amino acid dehydrogenase (417 aa).

3–17 lines the FAD pocket; it reads VVILGSGVIGVTSAW.

This sequence belongs to the DadA oxidoreductase family. The cofactor is FAD.

It carries out the reaction a D-alpha-amino acid + A + H2O = a 2-oxocarboxylate + AH2 + NH4(+). It functions in the pathway amino-acid degradation; D-alanine degradation; NH(3) and pyruvate from D-alanine: step 1/1. Its function is as follows. Oxidative deamination of D-amino acids. The chain is D-amino acid dehydrogenase from Edwardsiella ictaluri (strain 93-146).